Reading from the N-terminus, the 24-residue chain is Citropin-3.1.2 (24 aa).

In terms of tissue distribution, expressed by the dorsal and submental skin glands.

It is found in the secreted. The polypeptide is Citropin-3.1.2 (Ranoidea citropa (Australian Blue Mountains tree frog)).